The primary structure comprises 78 residues: Protein SlyX homolog (78 aa).

This sequence belongs to the SlyX family.

The chain is Protein SlyX homolog from Xanthomonas euvesicatoria pv. vesicatoria (strain 85-10) (Xanthomonas campestris pv. vesicatoria).